The sequence spans 181 residues: MLLVGRIGKSVGLNGGLKLHLESDFPECLKKGVKVSVAPINAFSRASSFKDYVIHSYEHAKNLLFLETIHTPEKAKELTNLGLFMSEAESKKLCVLKEGEFFYCDLVGLSVVEENEFLGKVIEIQRISQIDYFLVETTKSLVEKGLAKIFLIPYRDFYIQEILLQDKKITTHNAKTLLENS.

The 80-residue stretch at 98-177 folds into the PRC barrel domain; sequence EGEFFYCDLV…KITTHNAKTL (80 aa).

It belongs to the RimM family. Binds ribosomal protein uS19.

The protein localises to the cytoplasm. Functionally, an accessory protein needed during the final step in the assembly of 30S ribosomal subunit, possibly for assembly of the head region. Essential for efficient processing of 16S rRNA. May be needed both before and after RbfA during the maturation of 16S rRNA. It has affinity for free ribosomal 30S subunits but not for 70S ribosomes. This chain is Ribosome maturation factor RimM, found in Helicobacter pylori (strain HPAG1).